We begin with the raw amino-acid sequence, 370 residues long: E3 ubiquitin-protein ligase E3D (370 aa).

Ala2 carries the post-translational modification N-acetylalanine. The BRAT1-like motif signature appears at 129–159 (PLPSENWSALVGEWCCHPDPFANKPLHPREN). Cys144 serves as a coordination point for Zn(2+). An interaction with UBE2C region spans residues 214 to 236 (QPSEGSFPNIPRSQFVQSVIARC). The HECT-like stretch occupies residues 332 to 368 (LPSTTCLELLLILSRNNASLPLSLRQMNSFQLWCSHC).

In terms of assembly, interacts with UBE2C/UbcH10 (E2 ubiquitin-conjugating enzyme). In vitro, interacts with cyclin-B. Post-translationally, ubiquitinated by UBCH10 (E2 ubiquitin-conjugating enzyme).

Its subcellular location is the cytoplasm. It catalyses the reaction S-ubiquitinyl-[E2 ubiquitin-conjugating enzyme]-L-cysteine + [acceptor protein]-L-lysine = [E2 ubiquitin-conjugating enzyme]-L-cysteine + N(6)-ubiquitinyl-[acceptor protein]-L-lysine.. The protein operates within protein modification; protein ubiquitination. Its function is as follows. E3 ubiquitin-protein ligase which accepts ubiquitin from specific E2 ubiquitin-conjugating enzymes, and transfers it to substrates, generally promoting their degradation by the proteasome. Independently of its E3 ubiquitin-protein ligase activity, acts as an inhibitor of CPSF3 endonuclease activity by blocking CPSF3 active site. This is E3 ubiquitin-protein ligase E3D (Ube3d) from Rattus norvegicus (Rat).